Consider the following 268-residue polypeptide: 4-hydroxy-tetrahydrodipicolinate reductase (268 aa).

Residues 10-15 (GASGRM), aspartate 36, 99-101 (GTT), and 123-126 (APNM) contribute to the NAD(+) site. Residue histidine 156 is the Proton donor/acceptor of the active site. A (S)-2,3,4,5-tetrahydrodipicolinate-binding site is contributed by histidine 157. Residue lysine 160 is the Proton donor of the active site. 166–167 (GT) is a binding site for (S)-2,3,4,5-tetrahydrodipicolinate.

Belongs to the DapB family.

The protein resides in the cytoplasm. The enzyme catalyses (S)-2,3,4,5-tetrahydrodipicolinate + NAD(+) + H2O = (2S,4S)-4-hydroxy-2,3,4,5-tetrahydrodipicolinate + NADH + H(+). It catalyses the reaction (S)-2,3,4,5-tetrahydrodipicolinate + NADP(+) + H2O = (2S,4S)-4-hydroxy-2,3,4,5-tetrahydrodipicolinate + NADPH + H(+). It functions in the pathway amino-acid biosynthesis; L-lysine biosynthesis via DAP pathway; (S)-tetrahydrodipicolinate from L-aspartate: step 4/4. Functionally, catalyzes the conversion of 4-hydroxy-tetrahydrodipicolinate (HTPA) to tetrahydrodipicolinate. The sequence is that of 4-hydroxy-tetrahydrodipicolinate reductase from Herminiimonas arsenicoxydans.